The primary structure comprises 366 residues: Flagellar P-ring protein (366 aa).

The signal sequence occupies residues 1–20 (MVIKFLSALILLLVTTAAQA).

Belongs to the FlgI family. In terms of assembly, the basal body constitutes a major portion of the flagellar organelle and consists of four rings (L,P,S, and M) mounted on a central rod.

It is found in the periplasm. It localises to the bacterial flagellum basal body. In terms of biological role, assembles around the rod to form the L-ring and probably protects the motor/basal body from shearing forces during rotation. The sequence is that of Flagellar P-ring protein from Escherichia coli (strain UTI89 / UPEC).